The following is a 438-amino-acid chain: Adenosylhomocysteinase (438 aa).

Thr61, Asp137, and Glu162 together coordinate substrate. NAD(+) is bound at residue 163-165; that stretch reads TTT. Substrate contacts are provided by Lys192 and Asp196. Residues Asn197, 226–231, Glu249, Asn284, 305–307, and Asn352 contribute to the NAD(+) site; these read GYGDVG and IGH.

The protein belongs to the adenosylhomocysteinase family. The cofactor is NAD(+).

The protein localises to the cytoplasm. It carries out the reaction S-adenosyl-L-homocysteine + H2O = L-homocysteine + adenosine. Its pathway is amino-acid biosynthesis; L-homocysteine biosynthesis; L-homocysteine from S-adenosyl-L-homocysteine: step 1/1. In terms of biological role, may play a key role in the regulation of the intracellular concentration of adenosylhomocysteine. The protein is Adenosylhomocysteinase of Flavobacterium johnsoniae (strain ATCC 17061 / DSM 2064 / JCM 8514 / BCRC 14874 / CCUG 350202 / NBRC 14942 / NCIMB 11054 / UW101) (Cytophaga johnsonae).